The chain runs to 432 residues: Adenosylhomocysteinase (432 aa).

A disordered region spans residues 1-24 (MSAYSPLSAQLDADTDVDVESTRT). Substrate contacts are provided by Asp137 and Glu162. 163-165 (TTT) serves as a coordination point for NAD(+). Substrate-binding residues include Lys192 and Asp196. Residues Asn197, 226 to 231 (GYGYCG), Glu249, Asn284, 305 to 307 (AGH), and Asn352 contribute to the NAD(+) site.

The protein belongs to the adenosylhomocysteinase family. The cofactor is NAD(+).

Its subcellular location is the cytoplasm. The catalysed reaction is S-adenosyl-L-homocysteine + H2O = L-homocysteine + adenosine. The protein operates within amino-acid biosynthesis; L-homocysteine biosynthesis; L-homocysteine from S-adenosyl-L-homocysteine: step 1/1. Functionally, may play a key role in the regulation of the intracellular concentration of adenosylhomocysteine. In Haloquadratum walsbyi (strain DSM 16854 / JCM 12705 / C23), this protein is Adenosylhomocysteinase.